Consider the following 377-residue polypeptide: MSQPSLWKDSHYFIMWASCCNWFCLDGQPEEAPPPQGARTQAYSNPGYSSFPSPTGSEPSCKACGVHFASTTRKQTCLDCKKNFCMTCSSQEGNGPRLCLLCLRFRATAFQREELMKMKVKDLRDYLSLHDISTEMCREKEELVFLVLGQQPVISEADRTRVPHLPQAFPEQQAFLTQPQTSTVPPTSPGLPSSPAQVTSVPLAQDQETQQAVGHVSQDHEEPIFPESTARVPTEDETQSVDSEDSFVPGRRASLSDLTHLEDIEGLTVRQLKEILARNFVNYKGCCEKWELMERVTRLYKDQKGLQHLVSGNEDQNGGAVPSGLEENLCKICMDSPIDCVLLECGHMVTCTKCGKRMNECPICRQYVIRAVHVFRS.

The FYVE-type zinc finger occupies 55–107; that stretch reads TGSEPSCKACGVHFASTTRKQTCLDCKKNFCMTCSSQEGNGPRLCLLCLRFRA. One can recognise an SAP 1 domain in the interval 115 to 134; that stretch reads LMKMKVKDLRDYLSLHDIST. A disordered region spans residues 176–249; it reads LTQPQTSTVP…SVDSEDSFVP (74 aa). Over residues 190 to 212 the composition is skewed to polar residues; that stretch reads GLPSSPAQVTSVPLAQDQETQQA. The span at 235-245 shows a compositional bias: acidic residues; that stretch reads EDETQSVDSED. 4 positions are modified to phosphoserine: Ser240, Ser243, Ser246, and Ser254. The 15-residue stretch at 264-278 folds into the SAP 2 domain; the sequence is IEGLTVRQLKEILAR. The RING-type zinc-finger motif lies at 330–365; that stretch reads CKICMDSPIDCVLLECGHMVTCTKCGKRMNECPICR.

Interacts with CASP8 and CASP10. Interacts with RIPK1 (via protein kinase domain); involved in RIPK1 ubiquitination. Interacts with PRR5L. Interacts (via RING-type zinc finger) with p53/TP53; involved in p53/TP53 ubiquitination. Interacts (via RING-type zinc finger) with MDM2; the interaction stabilizes MDM2. Autoubiquitinated. Post-translationally, palmitoylated. In terms of processing, undergoes caspase-mediated cleavage upon death-receptor activation, by TNFSF10 for instance. May be mediated by the caspases CASP8 and CASP10 in a negative feedback loop. Ubiquitous. Detected in heart, brain, spleen, lung, liver, skeletal muscle, kidney, testis, thymus, whole embryo and embryonic stem cells.

It localises to the cytoplasm. The protein localises to the cytosol. It is found in the cell membrane. The protein resides in the recycling endosome membrane. It catalyses the reaction S-ubiquitinyl-[E2 ubiquitin-conjugating enzyme]-L-cysteine + [acceptor protein]-L-lysine = [E2 ubiquitin-conjugating enzyme]-L-cysteine + N(6)-ubiquitinyl-[acceptor protein]-L-lysine.. It functions in the pathway protein modification; protein ubiquitination. In terms of biological role, E3 ubiquitin-protein ligase that regulates several biological processes through the ubiquitin-mediated proteasomal degradation of various target proteins. Mediates 'Lys-48'-linked polyubiquitination of PRR5L and its subsequent proteasomal degradation thereby indirectly regulating cell migration through the mTORC2 complex. Also ubiquitinates the caspases CASP8 and CASP10, promoting their proteasomal degradation, to negatively regulate apoptosis downstream of death domain receptors. Also negatively regulates the tumor necrosis factor-mediated signaling pathway through targeting of RIPK1 to ubiquitin-mediated proteasomal degradation. Negatively regulates p53/TP53 through its direct ubiquitination and targeting to proteasomal degradation. Indirectly, may also negatively regulate p53/TP53 through ubiquitination and degradation of SFN. May also play a role in endocytic recycling. In Mus musculus (Mouse), this protein is E3 ubiquitin-protein ligase rififylin.